The chain runs to 1512 residues: MAALCLTVNAGNPPLEALLAVEHVKGDVSISVEEGKENLLRVSETVAFTDVNSILRYLARIATTSGLYGTNLMEHTEIDHWLEFSATKLSSCDRLTSAINELNHCLSLRTYLVGNSLTLADLCVWATLKGSAAWQEHLKQNKTLVHVKRWFGFLEAQQAFRSVGTKWDVSGNRATVAPDKKQDVGKFVELPGAEMGKVTVRFPPEASGYLHIGHAKAALLNQHYQVNFKGKLIMRFDDTNPEKEKEDFEKVILEDVAMLHIKPDQFTYTSDHFETIMKYAEKLIQEGKAYVDDTPAEQMKAEREQRTESKHRKNSVEKNLQMWEEMKKGSQFGQSCCLRAKIDMSSNNGCMRDPTLYRCKIQPHPRTGNKYNVYPTYDFACPIVDSIEGVTHALRTTEYHDRDEQFYWIIEALGIRKPYIWEYSRLNLNNTVLSKRKLTWFVNEGLVDGWDDPRFPTVRGVLRRGMTVEGLKQFIAAQGSSRSVVNMEWDKIWAFNKKVIDPVAPRYVALLKKEVVPVNVLDAQEEMKEVARHPKNPDVGLKPVWYSPKVFIEGADAETFSEGEMVTFINWGNINITKIHKNADGKITSLDAKLNLENKDYKKTTKITWLAESTHALSIPAVCVTYEHLITKPVLGKDEDFKQYINKDSKHEELMLGDPCLKDLKKGDIIQLQRRGFFICDQPYEPVSPYSCREAPCILIYIPDGHTKEMPTSGSKEKTKVEISKKETSSAPKERPAPAVSSTCATAEDSSVLYSRVAVQGDVVRELKAKKAPKEDIDAAVKQLLTLKAEYKEKTGQEYKPGNPSAAAVQTVSTKSSSNTVESTSLYNKVAAQGEVVRKLKAEKAPKAKVTEAVECLLSLKAEYKEKTGKDYVPGQPPASQNSHSNPVSNAQPAGAEKPEAKVLFDRVACQGEVVRKLKAEKASKDQVDSAVQELLQLKAQYKSLTGIEYKPVSATGAEDKDKKKKEKENKSEKQNKPQKQNDGQGKDSSKSQGSGLSSGGAGEGQGPKKQTRLGLEAKKEENLAEWYSQVITKSEMIEYYDVSGCYILRPWSYSIWESIKDFFDAEIKKLGVENCYFPIFVSQAALEKEKNHIEDFAPEVAWVTRSGKTELAEPIAIRPTSETVMYPAYAKWVQSHRDLPVRLNQWCNVVRWEFKHPQPFLRTREFLWQEGHSAFATFEEAADEVLQILELYARVYEELLAIPVVRGRKTEKEKFAGGDYTTTIEAFISASGRAIQGATSHHLGQNFSKMCEIVFEDPKTPGEKQFAYQCSWGLTTRTIGVMVMVHGDNMGLVLPPRVASVQVVVIPCGITNALSEEDREALMAKCNEYRRRLLGANIRVRVDLRDNYSPGWKFNHWELKGVPVRLEVGPRDMKSCQFVAVRRDTGEKLTIAEKEAEAKLEKVLEDIQLNLFTRASEDLKTHMVVSNTLEDFQKVLDAGKVAQIPFCGEIDCEDWIKKMTARDQDVEPGAPSMGAKSLCIPFNPLCELQPGAMCVCGKNPAKFYTLFGRSY.

Residues 164–759 (GTKWDVSGNR…SSVLYSRVAV (596 aa)) are glutamate--tRNA ligase. The 'HIGH' region signature appears at 204-214 (PEASGYLHIGH). Residues 294-315 (TPAEQMKAEREQRTESKHRKNS) are disordered. Over residues 299–308 (MKAEREQRTE) the composition is skewed to basic and acidic residues. K300 carries the post-translational modification N6-acetyllysine; alternate. N6-malonyllysine; alternate is present on K300. At T355 the chain carries Phosphothreonine. Residue K417 is modified to N6-acetyllysine. Positions 432–436 (VLSKR) match the 'KMSKS' region motif. S434 is modified (phosphoserine). Residues K498, K535, K542, and K637 each carry the N6-acetyllysine modification. Residues 709–736 (EMPTSGSKEKTKVEISKKETSSAPKERP) show a composition bias toward basic and acidic residues. The disordered stretch occupies residues 709-742 (EMPTSGSKEKTKVEISKKETSSAPKERPAPAVSS). Positions 749 to 805 (DSSVLYSRVAVQGDVVRELKAKKAPKEDIDAAVKQLLTLKAEYKEKTGQEYKPGNPS) constitute a WHEP-TRS 1 domain. Positions 760–956 (QGDVVRELKA…GIEYKPVSAT (197 aa)) are 3 X 57 AA approximate repeats. K788 carries the N6-acetyllysine modification. The segment at 795 to 819 (TGQEYKPGNPSAAAVQTVSTKSSSN) is disordered. Over residues 808–819 (AVQTVSTKSSSN) the composition is skewed to polar residues. The WHEP-TRS 2 domain maps to 822-878 (ESTSLYNKVAAQGEVVRKLKAEKAPKAKVTEAVECLLSLKAEYKEKTGKDYVPGQPP). N6-acetyllysine is present on K861. Disordered regions lie at residues 869-898 (GKDYVPGQPPASQNSHSNPVSNAQPAGAEK) and 956-1011 (TGAE…PKKQ). A Phosphotyrosine modification is found at Y872. The span at 878–892 (PASQNSHSNPVSNAQ) shows a compositional bias: polar residues. S885 carries the phosphoserine modification. In terms of domain architecture, WHEP-TRS 3 spans 900 to 956 (EAKVLFDRVACQGEVVRKLKAEKASKDQVDSAVQELLQLKAQYKSLTGIEYKPVSAT). Basic and acidic residues predominate over residues 958–976 (AEDKDKKKKEKENKSEKQN). Gly residues predominate over residues 997–1006 (LSSGGAGEGQ). Position 998 is a phosphoserine (S998). S999 bears the Phosphoserine; by RPS6KB1 mark. The tract at residues 1007-1512 (GPKKQTRLGL…KFYTLFGRSY (506 aa)) is proline--tRNA ligase. Residues 1121 to 1123 (TSE) and R1152 each bind L-proline. ATP contacts are provided by R1152, E1154, R1163, T1164, Q1237, and T1240. R1152 is subject to Omega-N-methylarginine. Position 1237 (Q1237) interacts with Mg(2+). H1242 contacts L-proline. T1276 and R1278 together coordinate ATP. S1350 is modified (phosphoserine). 4 residues coordinate Zn(2+): C1448, C1453, C1495, and C1497. K1503 is subject to N6-acetyllysine.

This sequence in the N-terminal section; belongs to the class-I aminoacyl-tRNA synthetase family. Glutamate--tRNA ligase type 2 subfamily. It in the C-terminal section; belongs to the class-II aminoacyl-tRNA synthetase family. Homodimer. Part of the aminoacyl-tRNA synthetase multienzyme complex, also know as multisynthetase complex, that is composed of the tRNA ligases for Arg (RARS1), Asp (DARS1), Gln (QARS1), Ile (IARS1), Leu (LARS1), Lys (KARS1), Met (MARS1) the bifunctional ligase for Glu and Pro (EPRS1) and the auxiliary subunits AIMP1/p43, AIMP2/p38 and EEF1E1/p18. Forms a linear complex that contains MARS1, EEF1E1, EPRS1 and AIMP2 that is at the core of the multisubunit complex. Interacts with TARS3. Interacts with DUS2L. Component of the GAIT complex which is composed of EPRS1, RPL13A and GAPDH. Interacts (phosphorylated at Ser-999) with SLC27A1; mediates the translocation of SLC27A1 from the cytoplasm to the plasma membrane thereby increasing the uptake of long-chain fatty acids. Phosphorylated at Ser-999 by RPS6KB1; triggers EPRS1 release from the aminoacyl-tRNA synthetase multienzyme complex. In monocytes, the IFN-gamma-induced phosphorylation at Ser-999 releases EPRS1 from the aminoacyl-tRNA synthetase multienzyme complex, allowing its association with the GAIT complex. Phosphorylation at Ser-999 is specifically required for the RPL13A-mediated interaction of the GAIT complex with eIF4G. Phosphorylation at Ser-999 by RPS6KB1, is also induced by insulin through activation of the mTORC1 signaling pathway and promotes the interaction of EPRS1 with SLC27A1.

It localises to the cytoplasm. The protein localises to the cytosol. The protein resides in the membrane. The enzyme catalyses tRNA(Glu) + L-glutamate + ATP = L-glutamyl-tRNA(Glu) + AMP + diphosphate. It carries out the reaction tRNA(Pro) + L-proline + ATP = L-prolyl-tRNA(Pro) + AMP + diphosphate. In terms of biological role, multifunctional protein which primarily functions within the aminoacyl-tRNA synthetase multienzyme complex, also known as multisynthetase complex. Within the complex it catalyzes the attachment of both L-glutamate and L-proline to their cognate tRNAs in a two-step reaction where the amino acid is first activated by ATP to form a covalent intermediate with AMP. Subsequently, the activated amino acid is transferred to the acceptor end of the cognate tRNA to form L-glutamyl-tRNA(Glu) and L-prolyl-tRNA(Pro). Upon interferon-gamma stimulation, EPRS1 undergoes phosphorylation, causing its dissociation from the aminoacyl-tRNA synthetase multienzyme complex. It is recruited to form the GAIT complex, which binds to stem loop-containing GAIT elements found in the 3'-UTR of various inflammatory mRNAs, such as ceruloplasmin. The GAIT complex inhibits the translation of these mRNAs, allowing interferon-gamma to redirect the function of EPRS1 from protein synthesis to translation inhibition in specific cell contexts. Furthermore, it can function as a downstream effector in the mTORC1 signaling pathway, by promoting the translocation of SLC27A1 from the cytoplasm to the plasma membrane where it mediates the uptake of long-chain fatty acid by adipocytes. Thereby, EPRS1 also plays a role in fat metabolism and more indirectly influences lifespan. The protein is Bifunctional glutamate/proline--tRNA ligase of Mus musculus (Mouse).